We begin with the raw amino-acid sequence, 96 residues long: uncharacterized protein (96 aa).

Its function is as follows. Essential for virus function. This is an uncharacterized protein from Saccharolobus solfataricus (Sulfolobus solfataricus).